Reading from the N-terminus, the 201-residue chain is MPGIFFSHANALKEVDNKPDEVMAQKKKNFAVDLKNYLKSMLPHLETMKSSSSTSSSDSEKNKLTPDEIIQWTMSLEKLLISEDGQSVFREFLKSEFSEENIEFWLACEDYKATNDSEELRCKANVIYQEFIQPNANKQINIDFSTRNSVTKDLLEPTITTFNDAQKMIFILMERDSYPRFLKSEIFLRLAERHHGNNVRG.

One can recognise an RGS domain in the interval 75–191 (SLEKLLISED…LKSEIFLRLA (117 aa)).

It localises to the cell membrane. The protein resides in the cytoplasm. It is found in the cytosol. In terms of biological role, regulates G protein-coupled receptor signaling cascades, including signaling downstream of the N-formylpeptide chemoattractant receptors and leukotriene receptors. Inhibits B cell chemotaxis. Inhibits signal transduction by increasing the GTPase activity of G protein alpha subunits, thereby driving them into their inactive GDP-bound form. The chain is Regulator of G-protein signaling 1 (rgs1) from Xenopus tropicalis (Western clawed frog).